Here is a 412-residue protein sequence, read N- to C-terminus: DnaJ homolog subfamily A member 2 (412 aa).

The 63-residue stretch at 8–70 folds into the J domain; that stretch reads KLYDILGVPP…EKRELYDRYG (63 aa). Lys-39 bears the N6-acetyllysine mark. A phosphoserine mark is found at Ser-78 and Ser-123. The CR-type zinc-finger motif lies at 130–214; it reads GKTTKLQLSK…CEGKKVIKEV (85 aa). Lys-134 is covalently cross-linked (Glycyl lysine isopeptide (Lys-Gly) (interchain with G-Cter in SUMO2)). Residues Cys-143 and Cys-146 each coordinate Zn(2+). The CXXCXGXG motif repeat unit spans residues 143-150; sequence CSACSGQG. Lys-152 bears the N6-acetyllysine mark. Cys-159, Cys-162, Cys-186, Cys-189, Cys-202, and Cys-205 together coordinate Zn(2+). 3 CXXCXGXG motif repeats span residues 159–166, 186–193, and 202–209; these read CSACRGRG, CSDCNGEG, and CKKCEGKK. The tract at residues 365–412 is disordered; the sequence is IGETEEVELQEFDSTRGSGGGQRREAYNDSSDEESSSHHGPGVQCAHQ. Tyr-391 is modified (phosphotyrosine). Phosphoserine occurs at positions 394 and 395. Cys-409 carries the post-translational modification Cysteine methyl ester. Residue Cys-409 is the site of S-farnesyl cysteine attachment. Positions 410 to 412 are cleaved as a propeptide — removed in mature form; sequence AHQ.

It is found in the membrane. Its function is as follows. Co-chaperone of Hsc70. Stimulates ATP hydrolysis and the folding of unfolded proteins mediated by HSPA1A/B (in vitro). This chain is DnaJ homolog subfamily A member 2 (DNAJA2), found in Homo sapiens (Human).